The primary structure comprises 147 residues: Deoxyuridine 5'-triphosphate nucleotidohydrolase (147 aa).

Substrate-binding positions include Arg-67–Gly-69, Asn-80, and Leu-84–Asp-86.

The protein belongs to the dUTPase family. Requires Mg(2+) as cofactor.

It carries out the reaction dUTP + H2O = dUMP + diphosphate + H(+). It functions in the pathway pyrimidine metabolism; dUMP biosynthesis; dUMP from dCTP (dUTP route): step 2/2. Its function is as follows. This enzyme is involved in nucleotide metabolism: it produces dUMP, the immediate precursor of thymidine nucleotides and it decreases the intracellular concentration of dUTP so that uracil cannot be incorporated into DNA. This is Deoxyuridine 5'-triphosphate nucleotidohydrolase from Dictyoglomus turgidum (strain DSM 6724 / Z-1310).